Here is a 605-residue protein sequence, read N- to C-terminus: uncharacterized protein (605 aa).

The segment at Val111–Val151 is disordered.

The protein localises to the golgi apparatus. This is an uncharacterized protein from Schizosaccharomyces pombe (strain 972 / ATCC 24843) (Fission yeast).